A 581-amino-acid chain; its full sequence is Putative ABC transporter ATP-binding protein MM_1996 (581 aa).

An ABC transporter 1 domain is found at 10-250; sequence IEIRDLWYTY…LEVFHRLGLR (241 aa). Position 44–51 (44–51) interacts with ATP; that stretch reads GPTGCGKS. The disordered stretch occupies residues 287–309; that stretch reads GDYPASPGRKEKTSSPGWSSENN. Residues 300-309 show a composition bias toward polar residues; that stretch reads SSPGWSSENN. In terms of domain architecture, ABC transporter 2 spans 313–541; it reads VSVRDLWSGY…IDILRKASLT (229 aa). Residue 346–353 participates in ATP binding; the sequence is GTNGSGKS.

The protein belongs to the ABC transporter superfamily.

It localises to the cell membrane. In terms of biological role, probably part of an ABC transporter complex. Responsible for energy coupling to the transport system. In Methanosarcina mazei (strain ATCC BAA-159 / DSM 3647 / Goe1 / Go1 / JCM 11833 / OCM 88) (Methanosarcina frisia), this protein is Putative ABC transporter ATP-binding protein MM_1996.